We begin with the raw amino-acid sequence, 283 residues long: uncharacterized protein (283 aa).

Y55 serves as the catalytic Proton donor.

This sequence belongs to the aldo/keto reductase family.

It localises to the cytoplasm. The protein localises to the nucleus. This is an uncharacterized protein from Schizosaccharomyces pombe (strain 972 / ATCC 24843) (Fission yeast).